We begin with the raw amino-acid sequence, 320 residues long: Aristolochene synthase (320 aa).

The segment covering 1-14 (MKKPNGTNGASSSL) has biased composition (polar residues). Residues 1–20 (MKKPNGTNGASSSLEPPPST) are disordered. D90, N219, S223, and E227 together coordinate Mg(2+). (2E,6E)-farnesyl diphosphate contacts are provided by R314 and Y315.

This sequence belongs to the terpene synthase family. As to quaternary structure, homodimer. Mg(2+) is required as a cofactor.

It catalyses the reaction (2E,6E)-farnesyl diphosphate = (+)-aristolochene + diphosphate. It functions in the pathway sesquiterpene biosynthesis; aristolochene biosynthesis; aristolochene from farnesyl diphosphate: step 1/1. In terms of biological role, catalyzes the cyclization of trans,trans-farnesyl diphosphate (FPP) to the bicyclic sesquiterpene aristolochene. Produces germacrene A as an enzyme-bound intermediate that is not released by the enzyme, but is further cyclized to produce aristolochene. Aristolochene is the likely parent compound for a number of sesquiterpenoid toxins produced by filamentous fungi. This is Aristolochene synthase (Ari1) from Aspergillus terreus.